The sequence spans 419 residues: S-adenosylmethionine synthase (419 aa).

H15 contacts ATP. Position 17 (D17) interacts with Mg(2+). E43 serves as a coordination point for K(+). 2 residues coordinate L-methionine: E56 and Q100. The tract at residues 100–110 (QSPDIAQGVDE) is flexible loop. Residues 171-173 (DGK), 248-249 (KF), D257, 263-264 (RK), A280, and K284 each bind ATP. D257 contacts L-methionine. K288 is a binding site for L-methionine.

The protein belongs to the AdoMet synthase family. As to quaternary structure, homotetramer; dimer of dimers. Mg(2+) is required as a cofactor. Requires K(+) as cofactor.

It localises to the cytoplasm. It carries out the reaction L-methionine + ATP + H2O = S-adenosyl-L-methionine + phosphate + diphosphate. The protein operates within amino-acid biosynthesis; S-adenosyl-L-methionine biosynthesis; S-adenosyl-L-methionine from L-methionine: step 1/1. Functionally, catalyzes the formation of S-adenosylmethionine (AdoMet) from methionine and ATP. The overall synthetic reaction is composed of two sequential steps, AdoMet formation and the subsequent tripolyphosphate hydrolysis which occurs prior to release of AdoMet from the enzyme. This Synechococcus sp. (strain WH7803) protein is S-adenosylmethionine synthase.